The chain runs to 172 residues: Lipoprotein signal peptidase (172 aa).

A run of 4 helical transmembrane segments spans residues 4–24 (LSSSAITTTWLAMIIIVLDQV), 39–59 (VAILPHLNLTLVYNYGAAFSF), 69–89 (WFFTALALVVGTALVIWLAKL), and 93–113 (WTLEVVAINLVLSGAIGNVID). Active-site residues include aspartate 122 and aspartate 140. Residues 136-156 (FNVADMGISIGAVLLIISEFW) form a helical membrane-spanning segment.

This sequence belongs to the peptidase A8 family.

The protein localises to the cell inner membrane. The catalysed reaction is Release of signal peptides from bacterial membrane prolipoproteins. Hydrolyzes -Xaa-Yaa-Zaa-|-(S,diacylglyceryl)Cys-, in which Xaa is hydrophobic (preferably Leu), and Yaa (Ala or Ser) and Zaa (Gly or Ala) have small, neutral side chains.. It functions in the pathway protein modification; lipoprotein biosynthesis (signal peptide cleavage). This protein specifically catalyzes the removal of signal peptides from prolipoproteins. The protein is Lipoprotein signal peptidase of Hydrogenovibrio crunogenus (strain DSM 25203 / XCL-2) (Thiomicrospira crunogena).